A 3289-amino-acid polypeptide reads, in one-letter code: tRNA nuclease CdiA (3289 aa).

A signal peptide spans 1 to 32; sequence MHQPPVRFTYRLLSYLISTIIAGQPLLPAVGA. Residues 36 to 322 form a two-partner system transport domain (TPS) region; that stretch reads PQNGAGMDKA…AGGNLSVSSR (287 aa). The tract at residues 351-1398 is FHA-1; that stretch reads EKLTAGRDVT…IVVRTGHLLN (1048 aa). Residues 595–615 are disordered; the sequence is AVNASEKLTHSGKSSAPSLSL. The receptor binding domain (RBD) stretch occupies residues 1399-1689; sequence QREGFSATTT…LTGQTGISDD (291 aa). The interval 1690-1874 is YP domain; it reads WPLPSGNNGY…LSPEDITLHN (185 aa). Residues 1875-1935 form a periplasmic FHA-1 repeat (pFR) region; sequence GSVISGNNVQ…DLSAIGDISN (61 aa). The interval 1979–2653 is FHA-2; sequence TDTGPVATIK…TSKYDSKQTS (675 aa). Positions 2097–2113 are enriched in basic and acidic residues; sequence RESKNSRNGRSESHESH. Disordered regions lie at residues 2097 to 2116, 2332 to 2356, and 2466 to 2513; these read RESK…HAAV, GSSK…TIGS, and TGDP…TGKN. Composition is skewed to polar residues over residues 2344-2356 and 2472-2507; these read GTTQ…TIGS and TGVS…NLSV. Positions 2992 to 3034 are pretoxin (PT) domain; sequence SDLSEEQKQTISTLATVSAGLAGGLTGNSTASAAVGAQSGKNA. The VENN CT cleavage motif motif lies at 3035–3038; it reads VENN. The tract at residues 3035–3289 is C-terminal effector domain (CT); has tRNase activity; it reads VENNYLSVSE…VGHIQPVKVK (255 aa). An inner membrane translocation domain (IMTD), targets protein to PtsG region spans residues 3039–3197; the sequence is YLSVSEKTEL…PLIGQAASNK (159 aa).

This sequence in the N-terminal section; belongs to the CdiA toxin family. In terms of assembly, forms a contact-dependent growth inhibition complex of CdiA-CT-NC101, CdiI-NC101 and EF-Tu; the complex is a dimer of heterotrimers. Stable CdiA-CT-NC101, EF-Tu complexes are not detected, nor are complexes with EF-Ts.

It is found in the secreted. It localises to the target cell. Its subcellular location is the target cell cytoplasm. In terms of biological role, toxic component of a toxin-immunity protein module, which functions as a cellular contact-dependent growth inhibition (CDI) system. CDI modules allow bacteria to communicate with and inhibit the growth of closely related neighboring bacteria in a contact-dependent fashion (target cell counts decrease about 10,0000-fold for this system). CdiA toxicity is neutralized by its cognate immunity protein CdiI-NC101, but not by CdiI from other bacteria. The C-terminal domain (CT) cleaves tRNA endonucleolytically at the 5' side of guanine discriminator nucleotide sites (removes the last 4 nucleotides of the tRNA acceptor arm when the first nucleotide to be removed is G). Requires EF-Ts (tsf) for toxic function of the CT domain in vivo. In vitro the CT tRNase activity requires both EF-Tu (tufA) and EF-Ts. EF-Ts probably increases steady-state GTP-EF-Tu-aa-tRNA substrate levels. The CT domain is thought to remodel this same complex to displace the 3'-end of the aa-tRNA and allow it to enter into the toxin active site. The CT domain gains access to the cytoplasm of target cells by using integral inner membrane protein PTS system glucose-specific EIICB component (ptsG). The CdiA protein is thought to be exported from the cell through the central lumen of CdiB, the other half of its two-partner system (TPS). The TPS domain probably remains associated with CdiB while the FHA-1 domain forms an extended filament with the receptor-binding domain (RBD) at its extremity; in the secretion arrested state the C-terminus of the RBD and YP domains form a hairpin-like structure as the FHA-2, PT and CT domains are periplasmic. The YP domain is probably responsible for this arrest at the point where it re-enters the host cell periplasm. Upon binding to a target cell outer membrane receptor a signal is transmitted to activate secretion. The filament elongates slightly, the rest of CdiA is secreted and the FHA-2 domain becomes stably associated with the target cell's outer membrane where it facilitates entry of the toxic CT domain into the target cell periplasm. From there the toxic CT domain is cleaved and gains access to the target cell cytoplasm via an inner membrane protein (PtsG for this CDI). In Escherichia coli (strain NC101), this protein is tRNA nuclease CdiA.